The primary structure comprises 264 residues: Exodeoxyribonuclease YycJ (264 aa).

A divalent metal cation contacts are provided by H58, H60, D62, H63, and D145.

It belongs to the metallo-beta-lactamase superfamily. The cofactor is Fe(2+). It depends on Zn(2+) as a cofactor. Mn(2+) serves as cofactor.

Its function is as follows. 5'-&gt;3' double-stranded DNA exonuclease. May play a role in mutation mismatch repair (MMR). Required for accurate coordination of cell division with DNA replication. May play a role in cell wall metabolism. The chain is Exodeoxyribonuclease YycJ from Bacillus anthracis.